The sequence spans 167 residues: Phospholipase A and acyltransferase 1 (167 aa).

Topologically, residues 1–138 are cytoplasmic; sequence MAVNDCFSLT…GEGVSEQANR (138 aa). The region spanning 20-135 is the LRAT domain; sequence LIEVFRPCYQ…LRYGEGVSEQ (116 aa). His30 is a catalytic residue. Cys119 serves as the catalytic Acyl-thioester intermediate. A helical transmembrane segment spans residues 139 to 159; the sequence is AIGTIGLVAAGIDIFTFLGLF. The Lumenal segment spans residues 160 to 167; it reads PKRQRTKY.

This sequence belongs to the H-rev107 family. As to expression, expressed in skeletal muscle, heart, brain, bone marrow and testis. In terms of tissue distribution, abundantly expressed in brain, heart, and skeletal muscle.

It is found in the membrane. The protein localises to the cytoplasm. Its subcellular location is the nucleus. The catalysed reaction is a 1,2-diacyl-sn-glycero-3-phosphocholine + H2O = a 1-acyl-sn-glycero-3-phosphocholine + a fatty acid + H(+). The enzyme catalyses a 1,2-diacyl-sn-glycero-3-phosphocholine + H2O = a 2-acyl-sn-glycero-3-phosphocholine + a fatty acid + H(+). It carries out the reaction 1,2-dihexadecanoyl-sn-glycero-3-phosphocholine + H2O = 2-hexadecanoyl-sn-glycero-3-phosphocholine + hexadecanoate + H(+). It catalyses the reaction 1,2-dihexadecanoyl-sn-glycero-3-phosphocholine + H2O = 1-hexadecanoyl-sn-glycero-3-phosphocholine + hexadecanoate + H(+). The catalysed reaction is 1-hexadecanoyl-2-(5Z,8Z,11Z,14Z-eicosatetraenoyl)-sn-glycero-3-phosphoethanolamine + H2O = 2-(5Z,8Z,11Z,14Z)-eicosatetraenoyl-sn-glycero-3-phosphoethanolamine + hexadecanoate + H(+). The enzyme catalyses 1-hexadecanoyl-2-(5Z,8Z,11Z,14Z-eicosatetraenoyl)-sn-glycero-3-phosphoethanolamine + H2O = 1-hexadecanoyl-sn-glycero-3-phosphoethanolamine + (5Z,8Z,11Z,14Z)-eicosatetraenoate + H(+). It carries out the reaction 1,2-di-(9Z-octadecenoyl)-sn-glycero-3-phosphoethanolamine + 1,2-dihexadecanoyl-sn-glycero-3-phosphocholine = hexadecanoyl-sn-glycero-3-phosphocholine + N-hexadecanoyl-1,2-di-(9Z-octadecenoyl)-sn-glycero-3-phosphoethanolamine + H(+). It catalyses the reaction 1,2-dihexadecanoyl-sn-glycero-3-phosphocholine + a 2-acyl-sn-glycero-3-phosphocholine = a 1-hexadecanoyl-2-acyl-sn-glycero-3-phosphocholine + 2-hexadecanoyl-sn-glycero-3-phosphocholine. In terms of biological role, exhibits both phospholipase A1/2 and acyltransferase activities. Shows phospholipase A1 (PLA1) and A2 (PLA2) activity, catalyzing the calcium-independent release of fatty acids from the sn-1 or sn-2 position of glycerophospholipids. Shows O-acyltransferase activity, catalyzing the transfer of a fatty acyl group from glycerophospholipid to the hydroxyl group of lysophospholipid. Shows N-acyltransferase activity, catalyzing the calcium-independent transfer of a fatty acyl group at the sn-1 position of phosphatidylcholine (PC) and other glycerophospholipids to the primary amine of phosphatidylethanolamine (PE), forming N-acylphosphatidylethanolamine (NAPE), which serves as precursor for N-acylethanolamines (NAEs). This chain is Phospholipase A and acyltransferase 1, found in Mus musculus (Mouse).